The sequence spans 106 residues: MPAYAIYFLAALAEITGCFAFWSWLRLGKSALWLIPGMASLALFAWLLTMVDAAAAGRTYAAYGGVYIVASLSWLWLAEGVRPDHWDMTGAAVALAGSAIILAGPR.

4 consecutive transmembrane segments (helical) span residues 5-25 (AIYF…WSWL), 31-51 (ALWL…LTMV), 61-81 (AAYG…AEGV), and 85-105 (HWDM…LAGP).

The protein belongs to the UPF0060 family.

It is found in the cell inner membrane. The sequence is that of UPF0060 membrane protein R01043 from Rhizobium meliloti (strain 1021) (Ensifer meliloti).